We begin with the raw amino-acid sequence, 108 residues long: UPF0060 membrane protein YnfA (108 aa).

At 1-5 (MLKTT) the chain is on the periplasmic side. The helical transmembrane segment at 6 to 26 (LLFFVTALCEIIGCFLPWLWL) threads the bilayer. Residues 27–30 (KRGA) lie on the Cytoplasmic side of the membrane. Residues 31-51 (SVWWLLPAAASLALFVWLLTL) traverse the membrane as a helical segment. Topologically, residues 52 to 60 (HPAASGRVY) are periplasmic. The helical transmembrane segment at 61-81 (AAYGGVYVCTALLWLRVVDGV) threads the bilayer. At 82–84 (RLT) the chain is on the cytoplasmic side. The chain crosses the membrane as a helical span at residues 85-105 (VYDWCGALIALCGMLIIVVGW). Residues 106–108 (GRT) are Periplasmic-facing.

This sequence belongs to the UPF0060 family.

It is found in the cell inner membrane. The chain is UPF0060 membrane protein YnfA from Salmonella agona (strain SL483).